A 127-amino-acid chain; its full sequence is Gamma-synuclein (127 aa).

2 tandem repeats follow at residues 20–30 (EKTKQGVTEAA) and 31–41 (EKTKEGVMYVG). Residues 20–67 (EKTKQGVTEAAEKTKEGVMYVGTKTKENVVHSVTSVAEKTKEQANAVS) form a 4 X 11 AA tandem repeats of [EGSA]-K-T-K-[EQ]-[GQ]-V-X(4) region. One copy of the 3; approximate repeat lies at 42–56 (TKTKENVVHSVTSVA). Residues 57-67 (EKTKEQANAVS) form repeat 4. Phosphoserine occurs at positions 67 and 72. The tract at residues 97–127 (KEDLKPSAPQQEGEAAKEKEEVAEEAQSGGD) is disordered. Serine 124 is subject to Phosphoserine; by BARK1, CaMK2 and CK2.

The protein belongs to the synuclein family. May be a centrosome-associated protein. Interacts with MYOC; affects its secretion and its aggregation. In terms of processing, phosphorylated. Phosphorylation by GRK5 appears to occur on residues distinct from the residue phosphorylated by other kinases.

It is found in the cytoplasm. The protein resides in the perinuclear region. The protein localises to the cytoskeleton. Its subcellular location is the microtubule organizing center. It localises to the centrosome. It is found in the spindle. Plays a role in neurofilament network integrity. May be involved in modulating axonal architecture during development and in the adult. In vitro, increases the susceptibility of neurofilament-H to calcium-dependent proteases. May also function in modulating the keratin network in skin. Activates the MAPK and Elk-1 signal transduction pathway. In Macaca fascicularis (Crab-eating macaque), this protein is Gamma-synuclein (SNCG).